Reading from the N-terminus, the 412-residue chain is Serine hydroxymethyltransferase (412 aa).

(6S)-5,6,7,8-tetrahydrofolate contacts are provided by residues Leu-120 and 124 to 126 (GHL). At Lys-229 the chain carries N6-(pyridoxal phosphate)lysine. 352–354 (SPF) is a (6S)-5,6,7,8-tetrahydrofolate binding site.

It belongs to the SHMT family. Homodimer. Requires pyridoxal 5'-phosphate as cofactor.

It localises to the cytoplasm. The catalysed reaction is (6R)-5,10-methylene-5,6,7,8-tetrahydrofolate + glycine + H2O = (6S)-5,6,7,8-tetrahydrofolate + L-serine. Its pathway is one-carbon metabolism; tetrahydrofolate interconversion. The protein operates within amino-acid biosynthesis; glycine biosynthesis; glycine from L-serine: step 1/1. Its function is as follows. Catalyzes the reversible interconversion of serine and glycine with tetrahydrofolate (THF) serving as the one-carbon carrier. This reaction serves as the major source of one-carbon groups required for the biosynthesis of purines, thymidylate, methionine, and other important biomolecules. Also exhibits THF-independent aldolase activity toward beta-hydroxyamino acids, producing glycine and aldehydes, via a retro-aldol mechanism. The polypeptide is Serine hydroxymethyltransferase (Acetivibrio thermocellus (strain ATCC 27405 / DSM 1237 / JCM 9322 / NBRC 103400 / NCIMB 10682 / NRRL B-4536 / VPI 7372) (Clostridium thermocellum)).